We begin with the raw amino-acid sequence, 130 residues long: Small ribosomal subunit protein uS11 (130 aa).

This sequence belongs to the universal ribosomal protein uS11 family. Part of the 30S ribosomal subunit. Interacts with proteins S7 and S18. Binds to IF-3.

In terms of biological role, located on the platform of the 30S subunit, it bridges several disparate RNA helices of the 16S rRNA. Forms part of the Shine-Dalgarno cleft in the 70S ribosome. The chain is Small ribosomal subunit protein uS11 from Shewanella denitrificans (strain OS217 / ATCC BAA-1090 / DSM 15013).